The following is a 322-amino-acid chain: MAAAPSESIPSVNKAWVXSEYGKTSDVLKFDPSVAVPEIKEDQVLIKVVAASLNPVDFKRALGYFKDTDSPLPTIPGYYVAGVVVKVGSQVTKFKVGDEVYGDLNETALVNPTRFGSLAEYTAADERVLAHKPKNLSFIEAASLPLAIETAHEGLERAELSAGKSVLVLGGAGGVGTHIIQLAKHVFGASKVAATASTKKLDLLRTLGADLAIDYTKENFEDLPEKFDVVYDAVGETDKAVKAVKEGGKVVTIVGPATPPAILFVLTSKGSVLEKLKPYLESGKVKPVLDPTSPYPFTKVVEAFGYLESSRATGKVVVYPIP.

NADP(+) contacts are provided by residues K59, 174–175 (GV), 197–200 (STKK), Y215, I253, 264–266 (FVL), and 311–312 (RA). K59 serves as a coordination point for substrate.

This sequence belongs to the zinc-containing alcohol dehydrogenase family. Quinone oxidoreductase subfamily. Monomer.

The enzyme catalyses 4-hydroxy-2,5-dimethyl-furan-3(2H)-one + NADP(+) = 4-hydroxy-5-methyl-2-methylenefuran-3(2H)-one + NADPH + H(+). Enone oxidoreductase involved in the biosynthesis of 4-hydroxy-2,5-dimethyl-3(2H)-furanone (HDMF or furaneol), the key flavor compound in strawberries. The sequence is that of 2-methylene-furan-3-one reductase (EO) from Fragaria vesca (Woodland strawberry).